We begin with the raw amino-acid sequence, 447 residues long: GTPase Der (447 aa).

EngA-type G domains are found at residues 4–165 and 180–357; these read QIIT…PEEE and LQIV…KIWN. Residues 10 to 17, 57 to 61, 119 to 122, 186 to 193, 233 to 237, and 298 to 301 each bind GTP; these read GRPNVGKS, DTPGL, NKCE, GRPNAGKS, DTAGL, and NKWD. The 86-residue stretch at 358–443 folds into the KH-like domain; the sequence is KKITTSKLNE…PIRFIYVKTK (86 aa).

The protein belongs to the TRAFAC class TrmE-Era-EngA-EngB-Septin-like GTPase superfamily. EngA (Der) GTPase family. Associates with the 50S ribosomal subunit.

Functionally, GTPase that plays an essential role in the late steps of ribosome biogenesis. This Rickettsia peacockii (strain Rustic) protein is GTPase Der.